Consider the following 375-residue polypeptide: Transcription factor E2F4 (375 aa).

A DNA-binding region spans residues 12–81 (SRHEKSLGLL…KNSIQWKGVG (70 aa)). Residues 39 to 61 (LKAAADTLAVRQKRRIYDITNVL) are leucine-zipper. Residues 44 to 81 (DTLAVRQKRRIYDITNVLEGIGLIEKKSKNSIQWKGVG) carry the DEF box motif. Residues 82–177 (PGCNTREIAD…NTNGQKKFQI (96 aa)) form a dimerization region. A disordered region spans residues 197-300 (SSAPVVVPVP…PDPSTSFQPI (104 aa)). The span at 220 to 270 (STPQRPALTPQNDIATSPAPTVPHSTISNAESQDCPTGQTFSMENTTSSRL) shows a compositional bias: polar residues. Low complexity predominate over residues 280-296 (SSASLDNSNDSPDPSTS). The transactivation stretch occupies residues 299 to 375 (PIKSDLSDVL…CDLFDVPINL (77 aa)).

This sequence belongs to the E2F/DP family. In terms of assembly, component of the drtf1/e2f transcription factor complex. Component of the EDM complex, at least composed of e2f4, e2f5, mcidas and tfdp1.

It localises to the nucleus. In terms of biological role, transcription activator that binds DNA cooperatively with DP proteins through the E2 recognition site, 5'-TTTC[CG]CGC-3' found in the promoter region of a number of genes. Component of the EDM complex, a complex specifically required for multiciliate cell differentiation: the EDM complex binds and activate genes required for centriole biogenesis. Activates genes required for centriole assembly (plk4, cep152) and genes specifically required for motile cilia formation (foxj1). Also promotes the deuterosome pathway of centriole biogenesis by activating expression of deup1, but not its paralog cep63. The chain is Transcription factor E2F4 from Xenopus laevis (African clawed frog).